A 459-amino-acid polypeptide reads, in one-letter code: tRNA modification GTPase MnmE (459 aa).

(6S)-5-formyl-5,6,7,8-tetrahydrofolate is bound by residues Arg23, Glu88, and Arg127. Positions 223–381 (GLDVVIVGKP…LKEYIKDLFF (159 aa)) constitute a TrmE-type G domain. Residue Asn233 participates in K(+) binding. GTP contacts are provided by residues 233–238 (NVGKSS), 252–258 (TEIPGTT), and 277–280 (DTAG). Ser237 is a Mg(2+) binding site. The K(+) site is built by Thr252, Ile254, and Thr257. Thr258 is a binding site for Mg(2+). A (6S)-5-formyl-5,6,7,8-tetrahydrofolate-binding site is contributed by Lys459.

Belongs to the TRAFAC class TrmE-Era-EngA-EngB-Septin-like GTPase superfamily. TrmE GTPase family. As to quaternary structure, homodimer. Heterotetramer of two MnmE and two MnmG subunits. K(+) is required as a cofactor.

It is found in the cytoplasm. Exhibits a very high intrinsic GTPase hydrolysis rate. Involved in the addition of a carboxymethylaminomethyl (cmnm) group at the wobble position (U34) of certain tRNAs, forming tRNA-cmnm(5)s(2)U34. This is tRNA modification GTPase MnmE from Clostridium tetani (strain Massachusetts / E88).